Reading from the N-terminus, the 599-residue chain is Cytosolic Fe-S cluster assembly factor nar1 (599 aa).

Cys20, Cys62, Cys65, Cys68, Cys210, Cys265, Cys468, and Cys472 together coordinate [4Fe-4S] cluster.

It belongs to the NARF family.

Its function is as follows. Component of the cytosolic Fe/S protein assembly machinery. Required for maturation of extramitochondrial Fe/S proteins. May play a role in the transfer of pre-assembled Fe/S clusters to target apoproteins. The protein is Cytosolic Fe-S cluster assembly factor nar1 (nar1) of Aspergillus terreus (strain NIH 2624 / FGSC A1156).